A 27-amino-acid chain; its full sequence is iraD leader peptide (27 aa).

In terms of biological role, a short protein whose stop codon overlaps with the start codon of downstream iraD; its mRNA secondary structure is predicted to fold and sequester the Shine-Dalgarno sequence of iraD. When this protein is expressed the downstream iraD is also expressed due to ribosomal coupling. This chain is iraD leader peptide (idlP), found in Escherichia coli (strain K12).